A 146-amino-acid polypeptide reads, in one-letter code: uncharacterized protein (146 aa).

This is an uncharacterized protein from Acanthamoeba polyphaga mimivirus (APMV).